Here is a 349-residue protein sequence, read N- to C-terminus: Anthranilate phosphoribosyltransferase (349 aa).

5-phospho-alpha-D-ribose 1-diphosphate-binding positions include glycine 82, 85 to 86, 92 to 95, 110 to 118, and serine 122; these read GD, NVST, and KHGNRAVSG. Position 82 (glycine 82) interacts with anthranilate. Serine 94 contributes to the Mg(2+) binding site. Asparagine 113 serves as a coordination point for anthranilate. Arginine 168 contacts anthranilate. The Mg(2+) site is built by aspartate 227 and glutamate 228.

The protein belongs to the anthranilate phosphoribosyltransferase family. In terms of assembly, homodimer. It depends on Mg(2+) as a cofactor.

It carries out the reaction N-(5-phospho-beta-D-ribosyl)anthranilate + diphosphate = 5-phospho-alpha-D-ribose 1-diphosphate + anthranilate. The protein operates within amino-acid biosynthesis; L-tryptophan biosynthesis; L-tryptophan from chorismate: step 2/5. Catalyzes the transfer of the phosphoribosyl group of 5-phosphorylribose-1-pyrophosphate (PRPP) to anthranilate to yield N-(5'-phosphoribosyl)-anthranilate (PRA). The protein is Anthranilate phosphoribosyltransferase of Pseudomonas savastanoi pv. phaseolicola (strain 1448A / Race 6) (Pseudomonas syringae pv. phaseolicola (strain 1448A / Race 6)).